The following is a 408-amino-acid chain: Aspartate aminotransferase, cytoplasmic (408 aa).

The L-aspartate site is built by G36, W133, and N187. K251 is modified (N6-(pyridoxal phosphate)lysine). R379 is an L-aspartate binding site.

It belongs to the class-I pyridoxal-phosphate-dependent aminotransferase family. In terms of assembly, homodimer. Pyridoxal 5'-phosphate is required as a cofactor. As to expression, expressed in all somatic tissues including the nervous system.

The protein localises to the cytoplasm. It catalyses the reaction L-aspartate + 2-oxoglutarate = oxaloacetate + L-glutamate. In terms of biological role, biosynthesis of L-glutamate from L-aspartate. Important regulator of levels of glutamate, the major excitatory neurotransmitter of the central nervous system. The protein is Aspartate aminotransferase, cytoplasmic of Caenorhabditis elegans.